A 508-amino-acid polypeptide reads, in one-letter code: Photosystem II CP47 reaction center protein (508 aa).

6 helical membrane passes run alanine 21–serine 36, isoleucine 101–tryptophan 115, glycine 140–phenylalanine 156, isoleucine 203–serine 218, valine 237–valine 252, and threonine 457–arginine 472.

It belongs to the PsbB/PsbC family. PsbB subfamily. As to quaternary structure, PSII is composed of 1 copy each of membrane proteins PsbA, PsbB, PsbC, PsbD, PsbE, PsbF, PsbH, PsbI, PsbJ, PsbK, PsbL, PsbM, PsbT, PsbX, PsbY, PsbZ, Psb30/Ycf12, at least 3 peripheral proteins of the oxygen-evolving complex and a large number of cofactors. It forms dimeric complexes. Binds multiple chlorophylls. PSII binds additional chlorophylls, carotenoids and specific lipids. serves as cofactor.

The protein resides in the plastid. The protein localises to the chloroplast thylakoid membrane. Its function is as follows. One of the components of the core complex of photosystem II (PSII). It binds chlorophyll and helps catalyze the primary light-induced photochemical processes of PSII. PSII is a light-driven water:plastoquinone oxidoreductase, using light energy to abstract electrons from H(2)O, generating O(2) and a proton gradient subsequently used for ATP formation. In Brachypodium distachyon (Purple false brome), this protein is Photosystem II CP47 reaction center protein.